Consider the following 1487-residue polypeptide: Chromosome partition protein MukB (1487 aa).

34–41 (GGNGAGKS) contacts ATP. Coiled-coil stretches lie at residues 297–426 (SSRE…LEKA), 460–666 (ALKH…RLAS), 781–806 (RAAR…AKAA), 836–1111 (EQAL…RTFV), and 1210–1266 (VEAI…LSNI). The interval 667 to 784 (PGGSNDPRLK…VIPLFGRAAR (118 aa)) is flexible hinge.

It belongs to the SMC family. MukB subfamily. Homodimerization via its hinge domain. Binds to DNA via its C-terminal region. Interacts, and probably forms a ternary complex, with MukE and MukF via its C-terminal region. The complex formation is stimulated by calcium or magnesium. Interacts with tubulin-related protein FtsZ.

It is found in the cytoplasm. The protein localises to the nucleoid. Functionally, plays a central role in chromosome condensation, segregation and cell cycle progression. Functions as a homodimer, which is essential for chromosome partition. Involved in negative DNA supercoiling in vivo, and by this means organize and compact chromosomes. May achieve or facilitate chromosome segregation by condensation DNA from both sides of a centrally located replisome during cell division. The sequence is that of Chromosome partition protein MukB from Vibrio vulnificus (strain YJ016).